Here is a 614-residue protein sequence, read N- to C-terminus: Vitamin B12 transporter BtuB (614 aa).

The signal sequence occupies residues 1 to 20 (MIKKASLLTACSVTAFSAWA). Positions 26 to 33 (DTLVVTAN) match the TonB box motif. The region spanning 38–152 (PRSTVLAPTT…IGGVVNIITT (115 aa)) is the TBDR plug domain. Residues L83, S85, N92, and 110 to 111 (GS) each bind cyanocob(III)alamin. One can recognise a TBDR beta-barrel domain in the interval 155–614 (EPGTEISAGW…EYTLSGSYTF (460 aa)). A run of 3 beta stranded transmembrane segments spans residues 158 to 165 (TEISAGWG), 169 to 178 (YQNYDVSTQQ), and 184 to 195 (TRVTLLGDYAHT). 4 residues coordinate Ca(2+): D199, Q211, D213, and D215. The next 2 membrane-spanning stretches (beta stranded) occupy residues 217–227 (FLSKTLYGALE) and 232–248 (DAWSGFVRGYGYDNRTN). The Ca(2+) site is built by Y249 and D250. Position 251 (A251) interacts with cyanocob(III)alamin. D261 lines the Ca(2+) pocket. Transmembrane regions (beta stranded) follow at residues 263-277 (RKLYSQSWDAGLRYN), 279-296 (ELIKSQLITSYSHSKDYN), 309-325 (TLDEMKQYTVQWANNII), 328-337 (HGNVGAGVDW), 353-369 (YDQRNTGIYLTGLQQVG), 371-381 (FTFEGAARSDD), 385-400 (FGRHGTWQTSAGWEFI), 403-417 (YRFIASYGTSYKAPN), 434-443 (KSKQWEGAFE), 449-458 (VNWRISGYRN), 473-490 (YYNEGKARIKGVEATANF), 494-509 (PLTHTVSYDYVDARNA), 517-529 (RRAKQQVKYQLDW), and 535-550 (DWGITYQYLGTRYDKD). T309 lines the cyanocob(III)alamin pocket. A cyanocob(III)alamin-binding site is contributed by R517. Y551 contacts cyanocob(III)alamin. Transmembrane regions (beta stranded) follow at residues 558 to 572 (TVKMGGVSLWDLAVA), 585 to 596 (IANLFDKDYETV), and 602 to 614 (AGREYTLSGSYTF). The TonB C-terminal box signature appears at 597 to 614 (YGYQTAGREYTLSGSYTF).

The protein belongs to the TonB-dependent receptor family. BtuB (TC 1.B.14.3.1) subfamily.

The protein resides in the cell outer membrane. Functionally, involved in the active translocation of vitamin B12 (cyanocobalamin) across the outer membrane to the periplasmic space. It derives its energy for transport by interacting with the trans-periplasmic membrane protein TonB. This Escherichia coli O157:H7 protein is Vitamin B12 transporter BtuB.